The chain runs to 427 residues: MAP kinase-interacting serine/threonine-protein kinase 1 (427 aa).

Over residues 1–11 the composition is skewed to basic and acidic residues; it reads MVSSQKLEKPI. The interval 1–37 is disordered; the sequence is MVSSQKLEKPIEMGSSEPLPIVDSDKRRKKKRKTRAT. A Phosphothreonine; by PAK2 modification is found at threonine 34. Serine 39 carries the post-translational modification Phosphoserine; by PAK2. Residues 49–333 enclose the Protein kinase domain; it reads QLTSELLGEG…AAQVLQHPWV (285 aa). ATP contacts are provided by residues 55-63 and lysine 78; that span reads LGEGAYAKV. The Proton acceptor role is filled by aspartate 170. Residues serine 180 and serine 185 each carry the phosphoserine modification. 3 positions are modified to phosphothreonine: threonine 209, threonine 214, and threonine 344. A disordered region spans residues 407-427; that stretch reads RALAQAGRSRDANPCLTPAGL.

Belongs to the protein kinase superfamily. CAMK Ser/Thr protein kinase family. Interacts with the C-terminal regions of EIF4G1 and EIF4G2. Also binds to dephosphorylated ERK1 and ERK2, and to the p38 kinases. Mg(2+) is required as a cofactor. Post-translationally, dual phosphorylation of Thr-209 and Thr-214 activates the kinase. Phosphorylation of Thr-344 activates the kinase. MAPK3/ERK1 is one of the kinases which activate MKNK1/MNK1. Phosphorylation by PAK2 leads to a reduced phosphorylation of EIF4G1. As to expression, ubiquitously expressed in all tissues examined, with high levels in skeletal muscle.

The enzyme catalyses L-seryl-[protein] + ATP = O-phospho-L-seryl-[protein] + ADP + H(+). The catalysed reaction is L-threonyl-[protein] + ATP = O-phospho-L-threonyl-[protein] + ADP + H(+). Phosphorylated and activated by the p38 kinases and kinases in the Erk pathway. In terms of biological role, may play a role in the response to environmental stress and cytokines. Appears to regulate translation by phosphorylating EIF4E, thus increasing the affinity of this protein for the 7-methylguanosine-containing mRNA cap. In Mus musculus (Mouse), this protein is MAP kinase-interacting serine/threonine-protein kinase 1 (Mknk1).